The sequence spans 319 residues: Ribosomal RNA small subunit methyltransferase H (319 aa).

S-adenosyl-L-methionine-binding positions include 39–41 (GGH), Asp-59, Phe-83, Asp-104, and Gln-111.

The protein belongs to the methyltransferase superfamily. RsmH family.

The protein resides in the cytoplasm. The enzyme catalyses cytidine(1402) in 16S rRNA + S-adenosyl-L-methionine = N(4)-methylcytidine(1402) in 16S rRNA + S-adenosyl-L-homocysteine + H(+). Its function is as follows. Specifically methylates the N4 position of cytidine in position 1402 (C1402) of 16S rRNA. The chain is Ribosomal RNA small subunit methyltransferase H from Ralstonia nicotianae (strain ATCC BAA-1114 / GMI1000) (Ralstonia solanacearum).